Here is a 128-residue protein sequence, read N- to C-terminus: Large ribosomal subunit protein bL12 (128 aa).

It belongs to the bacterial ribosomal protein bL12 family. In terms of assembly, homodimer. Part of the ribosomal stalk of the 50S ribosomal subunit. Forms a multimeric L10(L12)X complex, where L10 forms an elongated spine to which 2 to 4 L12 dimers bind in a sequential fashion. Binds GTP-bound translation factors.

In terms of biological role, forms part of the ribosomal stalk which helps the ribosome interact with GTP-bound translation factors. Is thus essential for accurate translation. In Thermosipho africanus (strain TCF52B), this protein is Large ribosomal subunit protein bL12.